Reading from the N-terminus, the 359-residue chain is tRNA/tmRNA (uracil-C(5))-methyltransferase (359 aa).

Positions 183, 211, 216, 232, and 292 each coordinate S-adenosyl-L-methionine. Catalysis depends on Cys317, which acts as the Nucleophile. The Proton acceptor role is filled by Glu351.

Belongs to the class I-like SAM-binding methyltransferase superfamily. RNA M5U methyltransferase family. TrmA subfamily.

It carries out the reaction uridine(54) in tRNA + S-adenosyl-L-methionine = 5-methyluridine(54) in tRNA + S-adenosyl-L-homocysteine + H(+). It catalyses the reaction uridine(341) in tmRNA + S-adenosyl-L-methionine = 5-methyluridine(341) in tmRNA + S-adenosyl-L-homocysteine + H(+). Its function is as follows. Dual-specificity methyltransferase that catalyzes the formation of 5-methyluridine at position 54 (m5U54) in all tRNAs, and that of position 341 (m5U341) in tmRNA (transfer-mRNA). The protein is tRNA/tmRNA (uracil-C(5))-methyltransferase of Pseudomonas fluorescens (strain ATCC BAA-477 / NRRL B-23932 / Pf-5).